A 907-amino-acid chain; its full sequence is Protein translocase subunit SecA (907 aa).

Residues Q87, 105-109 (GEGKT), and D513 each bind ATP. Positions 841-853 (EAQRRAQAEEAAR) are enriched in basic and acidic residues. A disordered region spans residues 841 to 907 (EAQRRAQAEE…KYKQCHGQIN (67 aa)). Positions 854-865 (RAQAQHASAQSQ) are enriched in low complexity. Residues 872–887 (EGHHQPVVRDERKVGR) show a composition bias toward basic and acidic residues. 4 residues coordinate Zn(2+): C891, C893, C902, and H903.

It belongs to the SecA family. In terms of assembly, monomer and homodimer. Part of the essential Sec protein translocation apparatus which comprises SecA, SecYEG and auxiliary proteins SecDF-YajC and YidC. Zn(2+) is required as a cofactor.

Its subcellular location is the cell inner membrane. The protein localises to the cytoplasm. It carries out the reaction ATP + H2O + cellular proteinSide 1 = ADP + phosphate + cellular proteinSide 2.. Part of the Sec protein translocase complex. Interacts with the SecYEG preprotein conducting channel. Has a central role in coupling the hydrolysis of ATP to the transfer of proteins into and across the cell membrane, serving both as a receptor for the preprotein-SecB complex and as an ATP-driven molecular motor driving the stepwise translocation of polypeptide chains across the membrane. The chain is Protein translocase subunit SecA from Vibrio vulnificus (strain CMCP6).